The chain runs to 307 residues: MLSVVEGILILVVISESVFGVLGNGFIGLVNCIDCAKNKLSTIGFILTGLAISRIFLIWIIITDGFIQIFSPDVYASGNLIEYISYFWVITNQSSIWFATSLSIFYFLKIANFSNYIFLWLKSRINRVLPLLMGFLLISCLLNFAYIVKILNDLKMKNDTVWRLNMYKSEYFIKQLLLNLGVIFFFTLSLITSVLLIISLWRHNRQMQSNVTGLRDSITEAHVKAMKVLISFIILFILYFIGIAIEISYFTVPENKLLLIFGMTTTAIYPWGHSFILILGNSKLKQASLRVLQQLKCCEERKNLRAT.

Topologically, residues M1–E6 are extracellular. The chain crosses the membrane as a helical span at residues G7–I27. Residues G28–T42 lie on the Cytoplasmic side of the membrane. Residues I43–T63 traverse the membrane as a helical segment. Residues D64–T100 are Extracellular-facing. An N-linked (GlcNAc...) asparagine glycan is attached at N92. The chain crosses the membrane as a helical span at residues S101 to L121. The Cytoplasmic segment spans residues K122–N126. A helical membrane pass occupies residues R127–I147. At V148–N179 the chain is on the extracellular side. N158 is a glycosylation site (N-linked (GlcNAc...) asparagine). A helical membrane pass occupies residues L180 to L200. Residues W201–K227 are Cytoplasmic-facing. A helical membrane pass occupies residues V228–S248. Residues Y249–L257 lie on the Extracellular side of the membrane. Residues L258 to I278 form a helical membrane-spanning segment. The Cytoplasmic segment spans residues L279–T307.

The protein belongs to the G-protein coupled receptor T2R family.

The protein resides in the membrane. In terms of biological role, receptor that may play a role in the perception of bitterness and is gustducin-linked. May play a role in sensing the chemical composition of the gastrointestinal content. The activity of this receptor may stimulate alpha gustducin, mediate PLC-beta-2 activation and lead to the gating of TRPM5. This is Taste receptor type 2 member 10 (TAS2R10) from Papio hamadryas (Hamadryas baboon).